The primary structure comprises 562 residues: DNA-binding protein MutS2 (562 aa).

380–387 is a binding site for ATP; that stretch reads GANSGGKT.

This sequence belongs to the DNA mismatch repair MutS family. Archaeal Muts2 subfamily. In terms of assembly, multimer. Co(2+) is required as a cofactor. Requires Mn(2+) as cofactor.

Its function is as follows. Has ATPase and non-specific DNA-binding activities. May be involved in recombination and/or recombinational repair. Not involved in mismatch repair. In Pyrococcus furiosus (strain ATCC 43587 / DSM 3638 / JCM 8422 / Vc1), this protein is DNA-binding protein MutS2.